The following is a 429-amino-acid chain: Cytochrome P450 BJ-3 (429 aa).

Residue cysteine 376 participates in heme binding.

Belongs to the cytochrome P450 family. Requires heme as cofactor.

In terms of biological role, cytochromes P450 are a group of heme-thiolate monooxygenases. They oxidize a variety of structurally unrelated compounds, including steroids, fatty acids, and xenobiotics. The protein is Cytochrome P450 BJ-3 (cyp114) of Bradyrhizobium diazoefficiens (strain JCM 10833 / BCRC 13528 / IAM 13628 / NBRC 14792 / USDA 110).